We begin with the raw amino-acid sequence, 78 residues long: Large ribosomal subunit protein uL29 (78 aa).

Belongs to the universal ribosomal protein uL29 family.

The sequence is that of Large ribosomal subunit protein uL29 from Rippkaea orientalis (strain PCC 8801 / RF-1) (Cyanothece sp. (strain PCC 8801)).